Here is a 254-residue protein sequence, read N- to C-terminus: Isoprenyl transferase (254 aa).

The active site involves Asp23. Asp23 contributes to the Mg(2+) binding site. Substrate contacts are provided by residues Gly24 to Arg27, Trp28, Arg36, His40, and Ser68 to Glu70. The active-site Proton acceptor is the Asn71. Substrate-binding positions include Trp72, Arg74, Arg191, and Arg197 to Ser199. Glu210 contributes to the Mg(2+) binding site.

This sequence belongs to the UPP synthase family. As to quaternary structure, homodimer. Requires Mg(2+) as cofactor.

Catalyzes the condensation of isopentenyl diphosphate (IPP) with allylic pyrophosphates generating different type of terpenoids. In Porphyromonas gingivalis (strain ATCC BAA-308 / W83), this protein is Isoprenyl transferase.